The chain runs to 357 residues: Phosphate acyltransferase (357 aa).

It belongs to the PlsX family. As to quaternary structure, homodimer. Probably interacts with PlsY.

The protein resides in the cytoplasm. The enzyme catalyses a fatty acyl-[ACP] + phosphate = an acyl phosphate + holo-[ACP]. It functions in the pathway lipid metabolism; phospholipid metabolism. In terms of biological role, catalyzes the reversible formation of acyl-phosphate (acyl-PO(4)) from acyl-[acyl-carrier-protein] (acyl-ACP). This enzyme utilizes acyl-ACP as fatty acyl donor, but not acyl-CoA. This chain is Phosphate acyltransferase, found in Roseobacter denitrificans (strain ATCC 33942 / OCh 114) (Erythrobacter sp. (strain OCh 114)).